The chain runs to 54 residues: Small, acid-soluble spore protein gamma-type (54 aa).

Positions 1–54 are disordered; sequence MAKKNRNKQQQEMQQQQQQHQAEFANEFAEGSSAEQARQQQQKAAGKRQKKNQQ. Low complexity-rich tracts occupy residues 10–21 and 29–44; these read QQEMQQQQQQHQ and AEGSSAEQARQQQQKA. The span at 45-54 shows a compositional bias: basic residues; the sequence is AGKRQKKNQQ.

It belongs to the gamma-type SASP family.

SASP are proteins degraded in the first minutes of spore germination and provide amino acids for both new protein synthesis and metabolism. These proteins may be involved in dormant spore's high resistance to UV light. This Alkalihalophilus pseudofirmus (strain ATCC BAA-2126 / JCM 17055 / OF4) (Bacillus pseudofirmus) protein is Small, acid-soluble spore protein gamma-type (sspA).